The following is a 254-amino-acid chain: 3-deoxy-manno-octulosonate cytidylyltransferase (254 aa).

Belongs to the KdsB family.

It localises to the cytoplasm. The enzyme catalyses 3-deoxy-alpha-D-manno-oct-2-ulosonate + CTP = CMP-3-deoxy-beta-D-manno-octulosonate + diphosphate. Its pathway is nucleotide-sugar biosynthesis; CMP-3-deoxy-D-manno-octulosonate biosynthesis; CMP-3-deoxy-D-manno-octulosonate from 3-deoxy-D-manno-octulosonate and CTP: step 1/1. It participates in bacterial outer membrane biogenesis; lipopolysaccharide biosynthesis. In terms of biological role, activates KDO (a required 8-carbon sugar) for incorporation into bacterial lipopolysaccharide in Gram-negative bacteria. This chain is 3-deoxy-manno-octulosonate cytidylyltransferase, found in Nitrobacter winogradskyi (strain ATCC 25391 / DSM 10237 / CIP 104748 / NCIMB 11846 / Nb-255).